The chain runs to 150 residues: Transcription antitermination protein NusB (150 aa).

Belongs to the NusB family.

Its function is as follows. Involved in transcription antitermination. Required for transcription of ribosomal RNA (rRNA) genes. Binds specifically to the boxA antiterminator sequence of the ribosomal RNA (rrn) operons. In Streptococcus pyogenes serotype M6 (strain ATCC BAA-946 / MGAS10394), this protein is Transcription antitermination protein NusB.